The following is a 98-amino-acid chain: NADH-ubiquinone oxidoreductase chain 4L (98 aa).

3 consecutive transmembrane segments (helical) span residues 1 to 21, 25 to 45, and 67 to 87; these read MSLV…GLLM, HLMS…ILST, and AACE…TYGV.

It belongs to the complex I subunit 4L family. Core subunit of respiratory chain NADH dehydrogenase (Complex I) which is composed of 45 different subunits.

It is found in the mitochondrion inner membrane. It catalyses the reaction a ubiquinone + NADH + 5 H(+)(in) = a ubiquinol + NAD(+) + 4 H(+)(out). Its function is as follows. Core subunit of the mitochondrial membrane respiratory chain NADH dehydrogenase (Complex I) which catalyzes electron transfer from NADH through the respiratory chain, using ubiquinone as an electron acceptor. Part of the enzyme membrane arm which is embedded in the lipid bilayer and involved in proton translocation. This is NADH-ubiquinone oxidoreductase chain 4L (MT-ND4L) from Talpa europaea (European mole).